A 243-amino-acid polypeptide reads, in one-letter code: Putative C-type lectin protein A7 (243 aa).

Residues 23 to 43 form a helical membrane-spanning segment; it reads IFFILAATNLMIAAFALGCLA. The region spanning 116–223 is the C-type lectin domain; it reads GQKACYYVPP…CTTSKLCLCG (108 aa). Disulfide bonds link Cys137/Cys222 and Cys198/Cys214.

Its subcellular location is the host membrane. In Alcelaphine herpesvirus 1 (strain C500) (AlHV-1), this protein is Putative C-type lectin protein A7 (A7).